Consider the following 189-residue polypeptide: Holliday junction branch migration complex subunit RuvA (189 aa).

Residues 1–62 (MIVALKGNIE…EEAWSLYGFA (62 aa)) form a domain I region. The tract at residues 63-138 (EEAEKRVFDT…FSLSLQEGSK (76 aa)) is domain II. Residues 138–139 (KA) are flexible linker. The segment at 140–189 (STPPVFEESRLALESLGFKSELIAKALQNIQATTTQEIIKEALKKLQTLR) is domain III.

Belongs to the RuvA family. Homotetramer. Forms an RuvA(8)-RuvB(12)-Holliday junction (HJ) complex. HJ DNA is sandwiched between 2 RuvA tetramers; dsDNA enters through RuvA and exits via RuvB. An RuvB hexamer assembles on each DNA strand where it exits the tetramer. Each RuvB hexamer is contacted by two RuvA subunits (via domain III) on 2 adjacent RuvB subunits; this complex drives branch migration. In the full resolvosome a probable DNA-RuvA(4)-RuvB(12)-RuvC(2) complex forms which resolves the HJ.

The protein localises to the cytoplasm. Its function is as follows. The RuvA-RuvB-RuvC complex processes Holliday junction (HJ) DNA during genetic recombination and DNA repair, while the RuvA-RuvB complex plays an important role in the rescue of blocked DNA replication forks via replication fork reversal (RFR). RuvA specifically binds to HJ cruciform DNA, conferring on it an open structure. The RuvB hexamer acts as an ATP-dependent pump, pulling dsDNA into and through the RuvAB complex. HJ branch migration allows RuvC to scan DNA until it finds its consensus sequence, where it cleaves and resolves the cruciform DNA. The polypeptide is Holliday junction branch migration complex subunit RuvA (Wolinella succinogenes (strain ATCC 29543 / DSM 1740 / CCUG 13145 / JCM 31913 / LMG 7466 / NCTC 11488 / FDC 602W) (Vibrio succinogenes)).